Here is a 117-residue protein sequence, read N- to C-terminus: NADH-ubiquinone oxidoreductase chain 3 (117 aa).

A run of 3 helical transmembrane segments spans residues 8–28 (LIYF…SFIF), 61–81 (LVAI…PWAV), and 86–106 (IGFF…IGFI).

This sequence belongs to the complex I subunit 3 family.

It localises to the mitochondrion membrane. The enzyme catalyses a ubiquinone + NADH + 5 H(+)(in) = a ubiquinol + NAD(+) + 4 H(+)(out). Functionally, core subunit of the mitochondrial membrane respiratory chain NADH dehydrogenase (Complex I) that is believed to belong to the minimal assembly required for catalysis. Complex I functions in the transfer of electrons from NADH to the respiratory chain. The immediate electron acceptor for the enzyme is believed to be ubiquinone. This Tetraselmis subcordiformis (Marine green alga) protein is NADH-ubiquinone oxidoreductase chain 3 (ND3).